The chain runs to 334 residues: DNA-directed RNA polymerase subunit alpha (334 aa).

Residues 1–234 form an alpha N-terminal domain (alpha-NTD) region; the sequence is MQRSVHELLT…QQLAVFVDFD (234 aa). The segment at 248 to 334 is alpha C-terminal domain (alpha-CTD); sequence IDPILLRPVD…LRGDDRVLGG (87 aa).

It belongs to the RNA polymerase alpha chain family. In terms of assembly, homodimer. The RNAP catalytic core consists of 2 alpha, 1 beta, 1 beta' and 1 omega subunit. When a sigma factor is associated with the core the holoenzyme is formed, which can initiate transcription.

The catalysed reaction is RNA(n) + a ribonucleoside 5'-triphosphate = RNA(n+1) + diphosphate. Functionally, DNA-dependent RNA polymerase catalyzes the transcription of DNA into RNA using the four ribonucleoside triphosphates as substrates. The protein is DNA-directed RNA polymerase subunit alpha of Marinobacter nauticus (strain ATCC 700491 / DSM 11845 / VT8) (Marinobacter aquaeolei).